Consider the following 127-residue polypeptide: Small ribosomal subunit protein eS8 (127 aa).

It belongs to the eukaryotic ribosomal protein eS8 family. As to quaternary structure, part of the 30S ribosomal subunit.

The chain is Small ribosomal subunit protein eS8 (rps8e) from Pyrococcus abyssi (strain GE5 / Orsay).